A 538-amino-acid chain; its full sequence is Syncytin-1 (538 aa).

An N-terminal signal peptide occupies residues 1–20; it reads MALPYHIFLFTVLLPSFTLT. The Extracellular segment spans residues 21-443; sequence APPPCRCMTS…NIGPWGLFSQ (423 aa). N169 is a glycosylation site (N-linked (GlcNAc...) asparagine). The CXXC motif lies at 186 to 189; sequence CWMC. Intrachain disulfides connect C186/C189, C186/C405, and C397/C404. 6 N-linked (GlcNAc...) asparagine glycosylation sites follow: N208, N214, N234, N242, N245, and N281. The segment at 320–340 is fusion peptide; that stretch reads ILPFVMAAGVLGALGTGIGGI. The immunosuppression stretch occupies residues 380-396; it reads LQNRRALDLLTAERGGT. A CX6CC motif is present at residues 397 to 405; that stretch reads CLFLGEECC. N-linked (GlcNAc...) asparagine glycosylation occurs at N409. The chain crosses the membrane as a helical span at residues 444–464; sequence WMPWILPFLGPLAAIILLLLF. The essential for the fusiogenic function stretch occupies residues 465 to 484; the sequence is GPCIFNLLVNFVSSRIEAVK. Residues 465–538 are Cytoplasmic-facing; that stretch reads GPCIFNLLVN…LLRPNSAGSS (74 aa). The disordered stretch occupies residues 501-538; sequence PLDWPASPRSDVNDIKGTPPEEISTAQPLLRPNSAGSS.

It belongs to the gamma type-C retroviral envelope protein family. HERV class-I W env subfamily. In terms of assembly, the mature envelope protein (Env) consists of a trimer of SU-TM heterodimers attached probably by a labile interchain disulfide bond. Interacts with the C-type lectin CD209/DC-SIGN. Specific enzymatic cleavages in vivo yield mature proteins. Envelope glycoproteins are synthesized as an inactive precursor that is heavily N-glycosylated and processed likely by furin in the Golgi to yield the mature SU and TM proteins. The cleavage site between SU and TM requires the minimal sequence [KR]-X-[KR]-R. In terms of processing, the CXXC motif is highly conserved across a broad range of retroviral envelope proteins. It is thought to participate in the formation of a labile disulfide bond possibly with the CX6CC motif present in the transmembrane protein.

It localises to the cell membrane. It is found in the virion. In terms of biological role, this endogenous retroviral envelope protein has retained its original fusogenic properties and participates in trophoblast fusion and the formation of a syncytium during placenta morphogenesis. May recognize and induce fusion through binding of SLC1A4 and SLC1A5. Endogenous envelope proteins may have kept, lost or modified their original function during evolution. Retroviral envelope proteins mediate receptor recognition and membrane fusion during early infection. The surface protein (SU) mediates receptor recognition, while the transmembrane protein (TM) acts as a class I viral fusion protein. The protein may have at least 3 conformational states: pre-fusion native state, pre-hairpin intermediate state, and post-fusion hairpin state. During viral and target cell membrane fusion, the coiled coil regions (heptad repeats) assume a trimer-of-hairpins structure, positioning the fusion peptide in close proximity to the C-terminal region of the ectodomain. The formation of this structure appears to drive apposition and subsequent fusion of membranes. This chain is Syncytin-1 (ERVW-1), found in Pongo pygmaeus (Bornean orangutan).